The primary structure comprises 191 residues: MARRKAAPKRETLPDPLFHSELLAKFINAVMRNGKKSVAEKIVYGALDVVAKRVQNKSGEQGDGDGESGGKAGGIKKRSLGDIRTDENARALALETFKGALDKVMPNVEVKSRRVGGSTYQVPVEIRMARRQALARRWLVEYANKRNEKTMVLRLAHEILDAVEGRGGAIKKREDVHRMAKANQAFAHYRW.

Positions 56–80 (NKSGEQGDGDGESGGKAGGIKKRSL) are disordered.

The protein belongs to the universal ribosomal protein uS7 family. In terms of assembly, part of the 30S ribosomal subunit. Contacts proteins S9 and S11.

One of the primary rRNA binding proteins, it binds directly to 16S rRNA where it nucleates assembly of the head domain of the 30S subunit. Is located at the subunit interface close to the decoding center, probably blocks exit of the E-site tRNA. This is Small ribosomal subunit protein uS7 from Coxiella burnetii (strain CbuK_Q154) (Coxiella burnetii (strain Q154)).